Reading from the N-terminus, the 105-residue chain is Large ribosomal subunit protein uL24 (105 aa).

Belongs to the universal ribosomal protein uL24 family. As to quaternary structure, part of the 50S ribosomal subunit.

Functionally, one of two assembly initiator proteins, it binds directly to the 5'-end of the 23S rRNA, where it nucleates assembly of the 50S subunit. Its function is as follows. One of the proteins that surrounds the polypeptide exit tunnel on the outside of the subunit. This is Large ribosomal subunit protein uL24 from Mycobacterium avium (strain 104).